The sequence spans 396 residues: Phosphopentomutase (396 aa).

The Mn(2+) site is built by D13, D288, H293, D329, H330, and H341.

The protein belongs to the phosphopentomutase family. Mn(2+) is required as a cofactor.

Its subcellular location is the cytoplasm. It carries out the reaction 2-deoxy-alpha-D-ribose 1-phosphate = 2-deoxy-D-ribose 5-phosphate. The enzyme catalyses alpha-D-ribose 1-phosphate = D-ribose 5-phosphate. It functions in the pathway carbohydrate degradation; 2-deoxy-D-ribose 1-phosphate degradation; D-glyceraldehyde 3-phosphate and acetaldehyde from 2-deoxy-alpha-D-ribose 1-phosphate: step 1/2. Functionally, isomerase that catalyzes the conversion of deoxy-ribose 1-phosphate (dRib-1-P) and ribose 1-phosphate (Rib-1-P) to deoxy-ribose 5-phosphate (dRib-5-P) and ribose 5-phosphate (Rib-5-P), respectively. This Clostridium botulinum (strain Alaska E43 / Type E3) protein is Phosphopentomutase.